The chain runs to 187 residues: Ribonuclease HII (187 aa).

The RNase H type-2 domain occupies 1-187 (MIILGIDEAG…YKPVQVLLNE (187 aa)). A divalent metal cation contacts are provided by D7, E8, and D99.

Belongs to the RNase HII family. Mn(2+) serves as cofactor. It depends on Mg(2+) as a cofactor.

The protein localises to the cytoplasm. It catalyses the reaction Endonucleolytic cleavage to 5'-phosphomonoester.. Its function is as follows. Endonuclease that specifically degrades the RNA of RNA-DNA hybrids. In Francisella tularensis subsp. tularensis (strain FSC 198), this protein is Ribonuclease HII.